A 236-amino-acid chain; its full sequence is Glycosylphosphatidylinositol anchor biosynthesis protein 11 (236 aa).

2 helical membrane-spanning segments follow: residues 40–60 and 65–85; these read TLTI…FGLT and GVML…GYLI. An N-linked (GlcNAc...) asparagine glycan is attached at Asn-99. A run of 4 helical transmembrane segments spans residues 107-127, 139-159, 184-204, and 215-235; these read LLAG…VALI, ETYL…LVLY, ILLS…PIPL, and ITLL…CFLF.

The protein belongs to the PIGF family.

Its subcellular location is the endoplasmic reticulum membrane. Its pathway is glycolipid biosynthesis; glycosylphosphatidylinositol-anchor biosynthesis. Its function is as follows. Acts in the GPI biosynthetic pathway between GlcNAc-PI synthesis and GPI transfer to protein. The chain is Glycosylphosphatidylinositol anchor biosynthesis protein 11 (GPI11) from Debaryomyces hansenii (strain ATCC 36239 / CBS 767 / BCRC 21394 / JCM 1990 / NBRC 0083 / IGC 2968) (Yeast).